Reading from the N-terminus, the 325-residue chain is Cytochrome c1, heme protein, mitochondrial (325 aa).

The N-terminal 84 residues, 1–84 (MAAAAASLRR…AVALHSAVSA (84 aa)), are a transit peptide targeting the mitochondrion. Topologically, residues 85–287 (SDLELHPPSY…SEPEHDHRKR (203 aa)) are mitochondrial intermembrane. Residues 108-209 (TSIRRGFQVY…IVRARHGGED (102 aa)) form the Cytochrome c domain. Cys121, Cys124, His125, and Met244 together coordinate heme c. A helical transmembrane segment spans residues 288-308 (MGLKMLLMMGLLLPLTYAMKR). The Mitochondrial matrix segment spans residues 309 to 325 (HKWSVLKSRKLAYRPPK).

It belongs to the cytochrome c family. As to quaternary structure, component of the ubiquinol-cytochrome c oxidoreductase (cytochrome b-c1 complex, complex III, CIII), a multisubunit enzyme composed of 11 subunits. The complex is composed of 3 respiratory subunits cytochrome b, cytochrome c1 and Rieske protein UQCRFS1, 2 core protein subunits UQCRC1/QCR1 and UQCRC2/QCR2, and 6 low-molecular weight protein subunits UQCRH/QCR6, UQCRB/QCR7, UQCRQ/QCR8, UQCR10/QCR9, UQCR11/QCR10 and subunit 9, the cleavage product of Rieske protein UQCRFS1. The complex exists as an obligatory dimer and forms supercomplexes (SCs) in the inner mitochondrial membrane with NADH-ubiquinone oxidoreductase (complex I, CI) and cytochrome c oxidase (complex IV, CIV), resulting in different assemblies (supercomplex SCI(1)III(2)IV(1) and megacomplex MCI(2)III(2)IV(2)). Interacts with FLVCR2; this interaction occurs in the absence of heme and is disrupted upon heme binding. Heme c serves as cofactor.

It localises to the mitochondrion inner membrane. It carries out the reaction a quinol + 2 Fe(III)-[cytochrome c](out) = a quinone + 2 Fe(II)-[cytochrome c](out) + 2 H(+)(out). Its function is as follows. Component of the ubiquinol-cytochrome c oxidoreductase, a multisubunit transmembrane complex that is part of the mitochondrial electron transport chain which drives oxidative phosphorylation. The respiratory chain contains 3 multisubunit complexes succinate dehydrogenase (complex II, CII), ubiquinol-cytochrome c oxidoreductase (cytochrome b-c1 complex, complex III, CIII) and cytochrome c oxidase (complex IV, CIV), that cooperate to transfer electrons derived from NADH and succinate to molecular oxygen, creating an electrochemical gradient over the inner membrane that drives transmembrane transport and the ATP synthase. The cytochrome b-c1 complex catalyzes electron transfer from ubiquinol to cytochrome c, linking this redox reaction to translocation of protons across the mitochondrial inner membrane, with protons being carried across the membrane as hydrogens on the quinol. In the process called Q cycle, 2 protons are consumed from the matrix, 4 protons are released into the intermembrane space and 2 electrons are passed to cytochrome c. Cytochrome c1 is a catalytic core subunit containing a c-type heme. It transfers electrons from the [2Fe-2S] iron-sulfur cluster of the Rieske protein to cytochrome c. The sequence is that of Cytochrome c1, heme protein, mitochondrial (Cyc1) from Mus musculus (Mouse).